Reading from the N-terminus, the 366-residue chain is Spermidine/putrescine import ATP-binding protein PotA (366 aa).

An ABC transporter domain is found at 14–247; the sequence is ISARALRKVY…PADRFVADFI (234 aa). 49–56 provides a ligand contact to ATP; that stretch reads GPSGCGKT.

It belongs to the ABC transporter superfamily. Spermidine/putrescine importer (TC 3.A.1.11.1) family. As to quaternary structure, the complex is composed of two ATP-binding proteins (PotA), two transmembrane proteins (PotB and PotC) and a solute-binding protein (PotD).

It is found in the cell inner membrane. It carries out the reaction ATP + H2O + polyamine-[polyamine-binding protein]Side 1 = ADP + phosphate + polyamineSide 2 + [polyamine-binding protein]Side 1.. Its function is as follows. Part of the ABC transporter complex PotABCD involved in spermidine/putrescine import. Responsible for energy coupling to the transport system. In Ruegeria pomeroyi (strain ATCC 700808 / DSM 15171 / DSS-3) (Silicibacter pomeroyi), this protein is Spermidine/putrescine import ATP-binding protein PotA.